The primary structure comprises 288 residues: Serine/threonine-protein acetyltransferase YopJ (288 aa).

Residues His109 and Glu128 contribute to the active site. Residue His109 participates in CoA binding. 167-168 (RS) is a CoA binding site. Cys172 is an active-site residue. Residues 182–185 (KLYI) and 224–225 (KH) contribute to the 1D-myo-inositol hexakisphosphate site. Position 227 to 230 (227 to 230 (QGKK)) interacts with CoA. Arg257 is a binding site for 1D-myo-inositol hexakisphosphate. 266-270 (DGKEL) is a binding site for CoA.

It belongs to the acetyltransferase YopJ family. 1D-myo-inositol hexakisphosphate is required as a cofactor.

The protein localises to the secreted. It carries out the reaction L-threonyl-[protein] + acetyl-CoA = O-acetyl-L-threonyl-[protein] + CoA. It catalyses the reaction L-seryl-[protein] + acetyl-CoA = O-acetyl-L-seryl-[protein] + CoA. 1D-myo-inositol hexakisphosphate activates protein-acetyltransferase activity via an allosteric mechanism: 1D-myo-inositol hexakisphosphate-binding induces a conformational rearrangement that stimulates the interaction with acetyl-CoA. Serine/threonine-protein acetyltransferase translocated into infected cells, which inhibits the host immune response and induces cell death by mediating acetylation of target proteins. Inhibits the MAPK and NF-kappa-B signaling pathways by acetylating protein-kinases such as MAP2K1, MAP2K6, MAP3K7/TAK1 and I-kappa-B kinase (CHUK/IKKA and IKBKB) on serine and threonine residues critical for their activation by phosphorylation, thereby preventing protein-kinase activation. Promotes pyroptosis, a programmed cell death, in host cells by mediating acetylation of MAP3K7/TAK1: MAP3K7/TAK1 inactivation triggers activation of caspase-8 (CASP8), followed by CASP8-dependent cleavage of gasdermin-D (GSDMD) and induction of pyroptosis. In Yersinia pestis, this protein is Serine/threonine-protein acetyltransferase YopJ.